We begin with the raw amino-acid sequence, 238 residues long: DNA repair protein RecO (238 aa).

This sequence belongs to the RecO family.

Involved in DNA repair and RecF pathway recombination. The polypeptide is DNA repair protein RecO (Flavobacterium psychrophilum (strain ATCC 49511 / DSM 21280 / CIP 103535 / JIP02/86)).